Here is a 1033-residue protein sequence, read N- to C-terminus: Tyrosine-protein kinase-like otk (1033 aa).

The signal sequence occupies residues 1–22 (MTARMISIYGLVLASMMASVWA). Residues 23 to 581 (SSSRFQRLPQ…GGDGFLVTRA (559 aa)) lie on the Extracellular side of the membrane. Ig-like C2-type domains are found at residues 25–108 (SRFQ…REAS), 109–199 (PPAK…RVMS), 251–365 (PEDL…LPIS), 368–463 (PGVL…VAIN), and 468–558 (PKFS…VQLV). N-linked (GlcNAc...) asparagine glycosylation occurs at asparagine 39. 4 disulfides stabilise this stretch: cysteine 46–cysteine 95, cysteine 137–cysteine 188, cysteine 276–cysteine 354, and cysteine 399–cysteine 447. Asparagine 336, asparagine 417, asparagine 429, asparagine 444, asparagine 457, asparagine 512, and asparagine 524 each carry an N-linked (GlcNAc...) asparagine glycan. Cysteine 490 and cysteine 542 are joined by a disulfide. Residues 582–602 (VLITMTVALAYIVLVVGLMLW) traverse the membrane as a helical segment. Topologically, residues 603–1033 (CRYRRQARKA…LSKAMQSVEK (431 aa)) are cytoplasmic. Disordered stretches follow at residues 617-679 (LSTK…KKSA) and 718-760 (SPTD…KTSM). The span at 655 to 673 (KSSGDAQKSDDTACSQQSR) shows a compositional bias: polar residues. A Phosphoserine modification is found at serine 678. The 337-residue stretch at 692 to 1028 (LSELIQIGRG…QLGAALSKAM (337 aa)) folds into the Protein kinase; inactive domain. Basic and acidic residues predominate over residues 720 to 731 (TDKDADTEKQHS).

The protein belongs to the protein kinase superfamily. Tyr protein kinase family. Insulin receptor subfamily. In terms of assembly, interacts with plexA; component of a receptor complex that mediates the repulsive signaling in response to Semaphorin ligands.

It is found in the cell membrane. Its function is as follows. Acts as a calcium-dependent, homophilic cell adhesion molecule that regulates neural recognition during the development of the nervous system. Component of the repulsive Plexin signaling response to regulate motor axon guidance at the embryonic stage. Also component of a receptor complex that is required in the adult visual system to innervate the lamina layer; specific targeting of R1-R6 axons. This chain is Tyrosine-protein kinase-like otk, found in Drosophila erecta (Fruit fly).